The chain runs to 414 residues: Serine--tRNA ligase (414 aa).

Residue 230–232 (TAE) participates in L-serine binding. Position 261–263 (261–263 (RKE)) interacts with ATP. Glutamate 284 contacts L-serine. 348 to 351 (EISS) contacts ATP. Serine 382 is a binding site for L-serine.

Belongs to the class-II aminoacyl-tRNA synthetase family. Type-1 seryl-tRNA synthetase subfamily. As to quaternary structure, homodimer. The tRNA molecule binds across the dimer.

The protein resides in the cytoplasm. The catalysed reaction is tRNA(Ser) + L-serine + ATP = L-seryl-tRNA(Ser) + AMP + diphosphate + H(+). The enzyme catalyses tRNA(Sec) + L-serine + ATP = L-seryl-tRNA(Sec) + AMP + diphosphate + H(+). Its pathway is aminoacyl-tRNA biosynthesis; selenocysteinyl-tRNA(Sec) biosynthesis; L-seryl-tRNA(Sec) from L-serine and tRNA(Sec): step 1/1. Its function is as follows. Catalyzes the attachment of serine to tRNA(Ser). Is also able to aminoacylate tRNA(Sec) with serine, to form the misacylated tRNA L-seryl-tRNA(Sec), which will be further converted into selenocysteinyl-tRNA(Sec). In Nitratiruptor sp. (strain SB155-2), this protein is Serine--tRNA ligase.